A 370-amino-acid chain; its full sequence is 3-isopropylmalate dehydrogenase 1 (370 aa).

Substrate-binding residues include arginine 98, arginine 108, arginine 136, and aspartate 227. Mg(2+) is bound by residues aspartate 227, aspartate 251, and aspartate 255. Residue 289 to 301 participates in NAD(+) binding; that stretch reads GSAPDIAGQGIAN.

This sequence belongs to the isocitrate and isopropylmalate dehydrogenases family. LeuB type 1 subfamily. As to quaternary structure, homodimer. The cofactor is Mg(2+). Mn(2+) is required as a cofactor.

The protein resides in the cytoplasm. It carries out the reaction (2R,3S)-3-isopropylmalate + NAD(+) = 4-methyl-2-oxopentanoate + CO2 + NADH. Its pathway is amino-acid biosynthesis; L-leucine biosynthesis; L-leucine from 3-methyl-2-oxobutanoate: step 3/4. Catalyzes the oxidation of 3-carboxy-2-hydroxy-4-methylpentanoate (3-isopropylmalate) to 3-carboxy-4-methyl-2-oxopentanoate. The product decarboxylates to 4-methyl-2 oxopentanoate. The protein is 3-isopropylmalate dehydrogenase 1 of Bordetella bronchiseptica (strain ATCC BAA-588 / NCTC 13252 / RB50) (Alcaligenes bronchisepticus).